Here is a 193-residue protein sequence, read N- to C-terminus: MATASFNMQSVFAAPSGVLTTRNIRNTNQLFFKRIAPVGVRCMAQGDPIKEDPSVPSTSTSATPPQMPQSPPPPVSKPKVSTKFGDLLAFSGPAPERINGRLAMVGFVAAIAMELSKGENVFAQISDGGVGWFLGTTALLTLASMVPLFKGIRAEAKSKGFMTSDAELWNGRFAMLGLVALAFTEYVTGGTLV.

Residues 1–43 constitute a chloroplast transit peptide; the sequence is MATASFNMQSVFAAPSGVLTTRNIRNTNQLFFKRIAPVGVRCM. The interval 46–80 is disordered; sequence GDPIKEDPSVPSTSTSATPPQMPQSPPPPVSKPKV. Low complexity predominate over residues 54–64; that stretch reads SVPSTSTSATP. Residues 65 to 76 show a composition bias toward pro residues; sequence PQMPQSPPPPVS. Helical transmembrane passes span 102–122, 129–149, and 173–193; these read LAMVGFVAAIAMELSKGENVF, GVGWFLGTTALLTLASMVPLF, and FAMLGLVALAFTEYVTGGTLV.

It belongs to the ELIP/psbS family.

It is found in the plastid. Its subcellular location is the chloroplast thylakoid membrane. Its function is as follows. Probably involved in the integration of pigments into the mature light-harvesting pigment-protein complexes. Light-harvesting chlorophyll (LHC) a/b-binding protein required to ensure a high rate of chlorophyll accumulation during deetiolation in continuous high light. Involved in seed germination. May fulfill a photoprotective functions. Prevents excess accumulation of free chlorophyll by inhibiting the entire chlorophyll biosynthesis pathway (e.g. 5-aminolevulinate synthesis and Mg-protoporphyrin IX chelatase activity), and hence prevent photooxidative stress. This is Early light-induced protein 2, chloroplastic from Arabidopsis thaliana (Mouse-ear cress).